The primary structure comprises 302 residues: Transcription factor bHLH7 (302 aa).

Positions 124 to 154 are disordered; the sequence is QPMSQPAPPMPHQQSTIRPRVRARRGQATDP. A bHLH domain is found at 150 to 199; it reads QATDPHSIAERLRRERIAERIRSLQELVPTVNKTDRAAMIDEIVDYVKFL.

As to quaternary structure, homodimer. Expressed constitutively in roots, leaves, stems and flowers.

It localises to the nucleus. This Arabidopsis thaliana (Mouse-ear cress) protein is Transcription factor bHLH7 (BHLH7).